The sequence spans 175 residues: Urease accessory protein UreE (175 aa).

A disordered region spans residues 151–175 (GGAYGGSPSHAHRHSHVHSHSHETP). The span at 160-169 (HAHRHSHVHS) shows a compositional bias: basic residues.

It belongs to the UreE family.

It localises to the cytoplasm. In terms of biological role, involved in urease metallocenter assembly. Binds nickel. Probably functions as a nickel donor during metallocenter assembly. The protein is Urease accessory protein UreE of Synechococcus sp. (strain WH7805).